Here is a 248-residue protein sequence, read N- to C-terminus: Triosephosphate isomerase (248 aa).

9–11 (NWK) lines the substrate pocket. His94 serves as the catalytic Electrophile. Glu166 (proton acceptor) is an active-site residue. Substrate-binding positions include Gly172, Ser212, and 233–234 (GG).

This sequence belongs to the triosephosphate isomerase family. As to quaternary structure, homodimer.

It localises to the cytoplasm. The catalysed reaction is D-glyceraldehyde 3-phosphate = dihydroxyacetone phosphate. It participates in carbohydrate biosynthesis; gluconeogenesis. The protein operates within carbohydrate degradation; glycolysis; D-glyceraldehyde 3-phosphate from glycerone phosphate: step 1/1. In terms of biological role, involved in the gluconeogenesis. Catalyzes stereospecifically the conversion of dihydroxyacetone phosphate (DHAP) to D-glyceraldehyde-3-phosphate (G3P). This is Triosephosphate isomerase from Alkaliphilus oremlandii (strain OhILAs) (Clostridium oremlandii (strain OhILAs)).